The sequence spans 89 residues: Small ribosomal subunit protein uS15 (89 aa).

It belongs to the universal ribosomal protein uS15 family. In terms of assembly, part of the 30S ribosomal subunit. Forms a bridge to the 50S subunit in the 70S ribosome, contacting the 23S rRNA.

In terms of biological role, one of the primary rRNA binding proteins, it binds directly to 16S rRNA where it helps nucleate assembly of the platform of the 30S subunit by binding and bridging several RNA helices of the 16S rRNA. Its function is as follows. Forms an intersubunit bridge (bridge B4) with the 23S rRNA of the 50S subunit in the ribosome. This Pelodictyon phaeoclathratiforme (strain DSM 5477 / BU-1) protein is Small ribosomal subunit protein uS15.